Reading from the N-terminus, the 44-residue chain is Thymosin beta-4 (44 aa).

Composition is skewed to basic and acidic residues over residues 1-25 (MSDK…ETQE) and 33-44 (ETIEQEKQTSES). The tract at residues 1–44 (MSDKPDMAEIEKFDKAKLKKTETQEKNPLPSKETIEQEKQTSES) is disordered. N-acetylserine is present on Ser-2.

It belongs to the thymosin beta family. Spleen, kidney, heart, and oocytes.

The protein localises to the cytoplasm. It is found in the cytoskeleton. Functionally, plays an important role in the organization of the cytoskeleton. Binds to and sequesters actin monomers (G actin) and therefore inhibits actin polymerization. The protein is Thymosin beta-4 (tmsb4) of Xenopus laevis (African clawed frog).